We begin with the raw amino-acid sequence, 380 residues long: Queuine tRNA-ribosyltransferase (380 aa).

The active-site Proton acceptor is Asp96. Substrate is bound by residues 96-100 (DSGGF), Asp150, Gln193, and Gly220. The segment at 251–257 (GVGAPDS) is RNA binding. The active-site Nucleophile is Asp270. The tract at residues 275-279 (TRIAR) is RNA binding; important for wobble base 34 recognition. Zn(2+)-binding residues include Cys308, Cys310, Cys313, and His339.

This sequence belongs to the queuine tRNA-ribosyltransferase family. In terms of assembly, homodimer. Within each dimer, one monomer is responsible for RNA recognition and catalysis, while the other monomer binds to the replacement base PreQ1. The cofactor is Zn(2+).

The catalysed reaction is 7-aminomethyl-7-carbaguanine + guanosine(34) in tRNA = 7-aminomethyl-7-carbaguanosine(34) in tRNA + guanine. It functions in the pathway tRNA modification; tRNA-queuosine biosynthesis. In terms of biological role, catalyzes the base-exchange of a guanine (G) residue with the queuine precursor 7-aminomethyl-7-deazaguanine (PreQ1) at position 34 (anticodon wobble position) in tRNAs with GU(N) anticodons (tRNA-Asp, -Asn, -His and -Tyr). Catalysis occurs through a double-displacement mechanism. The nucleophile active site attacks the C1' of nucleotide 34 to detach the guanine base from the RNA, forming a covalent enzyme-RNA intermediate. The proton acceptor active site deprotonates the incoming PreQ1, allowing a nucleophilic attack on the C1' of the ribose to form the product. After dissociation, two additional enzymatic reactions on the tRNA convert PreQ1 to queuine (Q), resulting in the hypermodified nucleoside queuosine (7-(((4,5-cis-dihydroxy-2-cyclopenten-1-yl)amino)methyl)-7-deazaguanosine). In Streptococcus pyogenes serotype M49 (strain NZ131), this protein is Queuine tRNA-ribosyltransferase.